An 87-amino-acid polypeptide reads, in one-letter code: Phosphoribosyl-ATP pyrophosphatase (87 aa).

This sequence belongs to the PRA-PH family.

The protein localises to the cytoplasm. It carries out the reaction 1-(5-phospho-beta-D-ribosyl)-ATP + H2O = 1-(5-phospho-beta-D-ribosyl)-5'-AMP + diphosphate + H(+). The protein operates within amino-acid biosynthesis; L-histidine biosynthesis; L-histidine from 5-phospho-alpha-D-ribose 1-diphosphate: step 2/9. This is Phosphoribosyl-ATP pyrophosphatase from Arthrobacter sp. (strain FB24).